The following is a 104-amino-acid chain: Large ribosomal subunit protein bL21c (104 aa).

Belongs to the bacterial ribosomal protein bL21 family. In terms of assembly, part of the 50S ribosomal subunit.

The protein localises to the plastid. The protein resides in the chloroplast. This protein binds to 23S rRNA. The sequence is that of Large ribosomal subunit protein bL21c from Guillardia theta (Cryptophyte).